The following is a 384-amino-acid chain: tRNA-specific 2-thiouridylase MnmA (384 aa).

Residues M1–P26 are disordered. ATP-binding positions include G36 to S43 and M62. Positions N122–D124 are interaction with target base in tRNA. The Nucleophile role is filled by C127. Cysteines 127 and 223 form a disulfide. G151 serves as a coordination point for ATP. The interaction with tRNA stretch occupies residues K173–Q175. C223 serves as the catalytic Cysteine persulfide intermediate. The segment at R334–Y335 is interaction with tRNA.

It belongs to the MnmA/TRMU family.

The protein resides in the cytoplasm. The catalysed reaction is S-sulfanyl-L-cysteinyl-[protein] + uridine(34) in tRNA + AH2 + ATP = 2-thiouridine(34) in tRNA + L-cysteinyl-[protein] + A + AMP + diphosphate + H(+). In terms of biological role, catalyzes the 2-thiolation of uridine at the wobble position (U34) of tRNA, leading to the formation of s(2)U34. The chain is tRNA-specific 2-thiouridylase MnmA from Chromobacterium violaceum (strain ATCC 12472 / DSM 30191 / JCM 1249 / CCUG 213 / NBRC 12614 / NCIMB 9131 / NCTC 9757 / MK).